A 777-amino-acid polypeptide reads, in one-letter code: Androgen receptor (777 aa).

The interval 1–416 (MEVHIGLGGV…IDYYFPPQKP (416 aa)) is modulating. Disordered stretches follow at residues 53 to 95 (CVHP…QAPQ), 110 to 132 (GEQG…YPES), and 205 to 241 (RRAG…LSEP). 2 consecutive NR C4-type zinc fingers follow at residues 417–434 (CLSC…ALTC) and 453–472 (CASR…CPSC). The nuclear receptor DNA-binding region spans 417 to 489 (CLSCEDEASG…AGMTLGARKL (73 aa)). The region spanning 526–757 (SCQPIFLNVL…DFPEMMSEII (232 aa)) is the NR LBD domain. 3 residues coordinate 17beta-hydroxy-5alpha-androstan-3-one: Asn563, Arg610, and Thr735.

Belongs to the nuclear hormone receptor family. NR3 subfamily. As to quaternary structure, binds DNA as a homodimer. Interacts via the ligand-binding domain with LXXLL and FXXLF motifs from coactivator proteins. Interacts (via ligand-binding domain) with TRIM68. As to expression, detected in somatic Leydig and Sertoli cells in testis with high level expression. Also detected at lower expression levels in forebrain and heart.

It localises to the nucleus. The protein localises to the cytoplasm. In terms of biological role, steroid hormone receptors are ligand-activated transcription factors that regulate eukaryotic gene expression and affect cellular proliferation and differentiation in target tissues. Transcription factor activity is modulated by bound coactivator and corepressor proteins. In Aquarana catesbeiana (American bullfrog), this protein is Androgen receptor (ar).